The sequence spans 90 residues: UPF0335 protein Smed_2680 (90 aa).

Belongs to the UPF0335 family.

The polypeptide is UPF0335 protein Smed_2680 (Sinorhizobium medicae (strain WSM419) (Ensifer medicae)).